The primary structure comprises 160 residues: uncharacterized protein (160 aa).

Tyr49 bears the Phosphotyrosine mark.

Its function is as follows. May be involved in the assembly, structure, or function of the flagellum. May polymerize to form a filamentous structure that is part of the flagellum. This is an uncharacterized protein from Bacillus subtilis (strain 168).